Reading from the N-terminus, the 141-residue chain is 3-hydroxyacyl-[acyl-carrier-protein] dehydratase FabZ (141 aa).

Residue H48 is part of the active site.

Belongs to the thioester dehydratase family. FabZ subfamily.

The protein localises to the cytoplasm. The enzyme catalyses a (3R)-hydroxyacyl-[ACP] = a (2E)-enoyl-[ACP] + H2O. Involved in unsaturated fatty acids biosynthesis. Catalyzes the dehydration of short chain beta-hydroxyacyl-ACPs and long chain saturated and unsaturated beta-hydroxyacyl-ACPs. The protein is 3-hydroxyacyl-[acyl-carrier-protein] dehydratase FabZ of Streptococcus thermophilus (strain CNRZ 1066).